Reading from the N-terminus, the 573-residue chain is Arginine--tRNA ligase (573 aa).

The 'HIGH' region motif lies at Pro-122–His-132.

This sequence belongs to the class-I aminoacyl-tRNA synthetase family. In terms of assembly, monomer.

It localises to the cytoplasm. It catalyses the reaction tRNA(Arg) + L-arginine + ATP = L-arginyl-tRNA(Arg) + AMP + diphosphate. This chain is Arginine--tRNA ligase, found in Laribacter hongkongensis (strain HLHK9).